The chain runs to 61 residues: Metallothionein-1 (61 aa).

Methionine 1 bears the N-acetylmethionine mark. Residues 1 to 29 are beta; it reads MDPNCSCSTGGSCTCTSSCACKNCKCTSC. A divalent metal cation-binding residues include cysteine 5, cysteine 7, cysteine 13, cysteine 15, cysteine 19, cysteine 21, cysteine 24, cysteine 26, cysteine 29, cysteine 33, cysteine 34, cysteine 36, cysteine 37, cysteine 41, cysteine 44, cysteine 48, cysteine 50, cysteine 57, cysteine 59, and cysteine 60. Residues 30-61 form an alpha region; the sequence is KKSCCSCCPVGCSKCAQGCVCKGAADKCTCCA.

Belongs to the metallothionein superfamily. Type 1 family.

Metallothioneins have a high content of cysteine residues that bind various heavy metals; these proteins are transcriptionally regulated by both heavy metals and glucocorticoids. This is Metallothionein-1 (Mt1) from Mus musculus (Mouse).